The following is a 177-amino-acid chain: ATP synthase subunit delta (177 aa).

Belongs to the ATPase delta chain family. F-type ATPases have 2 components, F(1) - the catalytic core - and F(0) - the membrane proton channel. F(1) has five subunits: alpha(3), beta(3), gamma(1), delta(1), epsilon(1). F(0) has three main subunits: a(1), b(2) and c(10-14). The alpha and beta chains form an alternating ring which encloses part of the gamma chain. F(1) is attached to F(0) by a central stalk formed by the gamma and epsilon chains, while a peripheral stalk is formed by the delta and b chains.

It localises to the cell inner membrane. F(1)F(0) ATP synthase produces ATP from ADP in the presence of a proton or sodium gradient. F-type ATPases consist of two structural domains, F(1) containing the extramembraneous catalytic core and F(0) containing the membrane proton channel, linked together by a central stalk and a peripheral stalk. During catalysis, ATP synthesis in the catalytic domain of F(1) is coupled via a rotary mechanism of the central stalk subunits to proton translocation. Functionally, this protein is part of the stalk that links CF(0) to CF(1). It either transmits conformational changes from CF(0) to CF(1) or is implicated in proton conduction. This Actinobacillus pleuropneumoniae serotype 7 (strain AP76) protein is ATP synthase subunit delta.